The chain runs to 340 residues: N-acetyl-gamma-glutamyl-phosphate reductase (340 aa).

C149 is an active-site residue.

Belongs to the NAGSA dehydrogenase family. Type 1 subfamily.

The protein resides in the cytoplasm. It carries out the reaction N-acetyl-L-glutamate 5-semialdehyde + phosphate + NADP(+) = N-acetyl-L-glutamyl 5-phosphate + NADPH + H(+). It participates in amino-acid biosynthesis; L-arginine biosynthesis; N(2)-acetyl-L-ornithine from L-glutamate: step 3/4. Its function is as follows. Catalyzes the NADPH-dependent reduction of N-acetyl-5-glutamyl phosphate to yield N-acetyl-L-glutamate 5-semialdehyde. This Ruthia magnifica subsp. Calyptogena magnifica protein is N-acetyl-gamma-glutamyl-phosphate reductase.